Reading from the N-terminus, the 1588-residue chain is Autotransporter adhesin EhaG (1588 aa).

An N-terminal signal peptide occupies residues 1 to 53 (MNKIFKVIWNPATGNYTVTSETAKSRGKKSGRSKLLISALVAGGMLSSFGALA). The segment at 54–1499 (NAGNDNGQGV…QETKQYTDQR (1446 aa)) is surface exposed passenger domain. A translocator domain region spans residues 1500–1588 (MVEMDNKLSK…SAALGAGIQW (89 aa)). The next 4 beta stranded transmembrane spans lie at 1534–1544 (GASMASIGGGT), 1548–1558 (ESAVALGVSMV), 1567–1573 (KLQGSTN), and 1577–1588 (EYSAALGAGIQW).

It belongs to the autotransporter-2 (AT-2) (TC 1.B.40) family. Homotrimer.

It localises to the cell surface. The protein localises to the cell outer membrane. Its function is as follows. Mediates aggregation, biofilm formation and adhesion to a range of extracellular matrix (ECM) proteins, such as fibronectin, fibrinogen, laminin and collagen types I, II, III, and V. Mediates adhesion to intestinal epithelial cells. In Escherichia coli O157:H7, this protein is Autotransporter adhesin EhaG.